A 157-amino-acid polypeptide reads, in one-letter code: Protein Smg (157 aa).

The protein belongs to the Smg family.

The sequence is that of Protein Smg from Escherichia coli O7:K1 (strain IAI39 / ExPEC).